A 129-amino-acid chain; its full sequence is Small ribosomal subunit protein uS12 (129 aa).

This sequence belongs to the universal ribosomal protein uS12 family. Part of the 30S ribosomal subunit. Contacts proteins S8 and S17. May interact with IF1 in the 30S initiation complex.

In terms of biological role, with S4 and S5 plays an important role in translational accuracy. Its function is as follows. Interacts with and stabilizes bases of the 16S rRNA that are involved in tRNA selection in the A site and with the mRNA backbone. Located at the interface of the 30S and 50S subunits, it traverses the body of the 30S subunit contacting proteins on the other side and probably holding the rRNA structure together. The combined cluster of proteins S8, S12 and S17 appears to hold together the shoulder and platform of the 30S subunit. The sequence is that of Small ribosomal subunit protein uS12 from Rickettsia typhi (strain ATCC VR-144 / Wilmington).